Here is a 625-residue protein sequence, read N- to C-terminus: 1-deoxy-D-xylulose-5-phosphate synthase 1 (625 aa).

Thiamine diphosphate is bound by residues histidine 74 and 115-117 (GHT). Residue aspartate 146 coordinates Mg(2+). Residues 147–148 (GS), asparagine 175, tyrosine 286, and glutamate 368 each bind thiamine diphosphate. A Mg(2+)-binding site is contributed by asparagine 175.

Belongs to the transketolase family. DXPS subfamily. As to quaternary structure, homodimer. Requires Mg(2+) as cofactor. It depends on thiamine diphosphate as a cofactor.

It carries out the reaction D-glyceraldehyde 3-phosphate + pyruvate + H(+) = 1-deoxy-D-xylulose 5-phosphate + CO2. Its pathway is metabolic intermediate biosynthesis; 1-deoxy-D-xylulose 5-phosphate biosynthesis; 1-deoxy-D-xylulose 5-phosphate from D-glyceraldehyde 3-phosphate and pyruvate: step 1/1. In terms of biological role, catalyzes the acyloin condensation reaction between C atoms 2 and 3 of pyruvate and glyceraldehyde 3-phosphate to yield 1-deoxy-D-xylulose-5-phosphate (DXP). The sequence is that of 1-deoxy-D-xylulose-5-phosphate synthase 1 from Geobacter metallireducens (strain ATCC 53774 / DSM 7210 / GS-15).